Consider the following 217-residue polypeptide: Small ribosomal subunit protein uS3 (217 aa).

One can recognise a KH type-2 domain in the interval 40–110 (IRDLINNSFN…EVYINIHEVR (71 aa)).

The protein belongs to the universal ribosomal protein uS3 family. In terms of assembly, part of the 30S ribosomal subunit. Forms a tight complex with proteins S10 and S14.

Binds the lower part of the 30S subunit head. Binds mRNA in the 70S ribosome, positioning it for translation. This is Small ribosomal subunit protein uS3 from Rickettsia canadensis (strain McKiel).